The sequence spans 1161 residues: Auxin response factor 19 (1161 aa).

The interval 1 to 20 (MMKQAQQQPPPPPASSAATT) is disordered. The TF-B3 DNA-binding region spans 154–256 (FCKTLTASDT…QLLLGIRRAN (103 aa)). The interval 573–598 (NQMQQQHASSTQGQQPATSQPLLLPQ) is disordered. The PB1 domain maps to 1027-1111 (RTFTKVYKRG…KCIRILSPQE (85 aa)).

The protein belongs to the ARF family. Homodimers and heterodimers. Expressed in roots, culms, leaves and young panicles.

Its subcellular location is the nucleus. Functionally, auxin response factors (ARFs) are transcriptional factors that bind specifically to the DNA sequence 5'-TGTCTC-3' found in the auxin-responsive promoter elements (AuxREs). This Oryza sativa subsp. japonica (Rice) protein is Auxin response factor 19 (ARF19).